Consider the following 482-residue polypeptide: Bile acid receptor (482 aa).

Lysine 132 is covalently cross-linked (Glycyl lysine isopeptide (Lys-Gly) (interchain with G-Cter in SUMO1)). Positions aspartate 134–threonine 209 form a DNA-binding region, nuclear receptor. Residues cysteine 137–cysteine 157 form an NR C4-type zinc finger. A phosphoserine; by PKC/PRKCA mark is found at serine 145 and serine 164. Lysine 167 bears the N6-acetyllysine; by EP300 mark. The NR C4-type zinc-finger motif lies at cysteine 173–cysteine 197. An N6-methyllysine; by SETD7 modification is found at lysine 216. N6-acetyllysine; by EP300 is present on lysine 223. Basic and acidic residues predominate over residues alanine 229–arginine 240. The tract at residues alanine 229–threonine 253 is disordered. Residues aspartate 258–glutamine 482 enclose the NR LBD domain. Residue lysine 285 forms a Glycyl lysine isopeptide (Lys-Gly) (interchain with G-Cter in SUMO1) linkage. Arginine 341, tyrosine 371, and tyrosine 379 together coordinate chenodeoxycholate. Threonine 452 is modified (phosphothreonine; by PKC/PRKCZ). Histidine 457 contacts chenodeoxycholate.

Belongs to the nuclear hormone receptor family. NR1 subfamily. As to quaternary structure, heterodimer with RXRA; the heterodimerization enhances the binding affinity for LXXLL motifs from coactivators. Binds DNA predominantly as a heterodimer with RXRA. After activation by agonist binding interacts with coactivators. Interacts with NCOA1, NCOA2, PPARGC1A, CARM1, SETD7, PRMT1, GPS2, SMARCA4 and MED1, EP300 and SMARCD1. Interacts with XRCC5 and XRCC6; decreasing NR1H4/FXR transactivation activity towards ABCB11/BSEP. Interacts with PAGR1 AND NCOA6; indicative for an association with an MLL2/MLL3 complex (ASCOM). In terms of processing, acetylated by EP300. Lys-223 as is the major acetylation site for EP300; the dynamicly regulated acetylation inhibits heterodimerization with RXRA and transactivation activity. Deacetylated by SIRT1. Methylation may increase transactivation of target genes. Post-translationally, phosphorylation by PKC/PRKCA increases transactivation activity by promoting association with PPARGC1A. In terms of processing, sumoylated upon ligand binding.

It localises to the nucleus. Ligand-activated transcription factor. Receptor for bile acids (BAs) such as chenodeoxycholic acid (CDCA), lithocholic acid, deoxycholic acid (DCA) and allocholic acid (ACA). Plays a essential role in BA homeostasis through the regulation of genes involved in BA synthesis, conjugation and enterohepatic circulation. Also regulates lipid and glucose homeostasis and is involved innate immune response. The FXR-RXR heterodimer binds predominantly to farnesoid X receptor response elements (FXREs) containing two inverted repeats of the consensus sequence 5'-AGGTCA-3' in which the monomers are spaced by 1 nucleotide (IR-1) but also to tandem repeat DR1 sites with lower affinity, and can be activated by either FXR or RXR-specific ligands. It is proposed that monomeric nuclear receptors such as NR5A2/LRH-1 bound to coregulatory nuclear responsive element (NRE) halfsites located in close proximity to FXREs modulate transcriptional activity. In the liver activates transcription of the corepressor NR0B2 thereby indirectly inhibiting CYP7A1 and CYP8B1 (involved in BA synthesis) implicating at least in part histone demethylase KDM1A resulting in epigenomic repression, and SLC10A1/NTCP (involved in hepatic uptake of conjugated BAs). Activates transcription of the repressor MAFG (involved in regulation of BA synthesis). Activates transcription of SLC27A5/BACS and BAAT (involved in BA conjugation), ABCB11/BSEP (involved in bile salt export) by directly recruiting histone methyltransferase CARM1, and ABCC2/MRP2 (involved in secretion of conjugated BAs) and ABCB4 (involved in secretion of phosphatidylcholine in the small intestine). Activates transcription of SLC27A5/BACS and BAAT (involved in BA conjugation), ABCB11/BSEP (involved in bile salt export) by directly recruiting histone methyltransferase CARM1, and ABCC2/MRP2 (involved in secretion of conjugated BAs) and ABCB4 (involved in secretion of phosphatidylcholine in the small intestine). In the intestine activates FGF19 expression and secretion leading to hepatic CYP7A1 repression. The function also involves the coordinated induction of hepatic KLB/beta-klotho expression. Regulates transcription of liver UGT2B4 and SULT2A1 involved in BA detoxification; binding to the UGT2B4 promoter seems to imply a monomeric transactivation independent of RXRA. Modulates lipid homeostasis by activating liver NR0B2/SHP-mediated repression of SREBF1 (involved in de novo lipogenesis), expression of PLTP (involved in HDL formation), SCARB1 (involved in HDL hepatic uptake), APOE, APOC1, APOC4, PPARA (involved in beta-oxidation of fatty acids), VLDLR and SDC1 (involved in the hepatic uptake of LDL and IDL remnants), and inhibiting expression of MTTP (involved in VLDL assembly). Increases expression of APOC2 (promoting lipoprotein lipase activity implicated in triglyceride clearance). Transrepresses APOA1 involving a monomeric competition with NR2A1 for binding to a DR1 element. Also reduces triglyceride clearance by inhibiting expression of ANGPTL3 and APOC3 (both involved in inhibition of lipoprotein lipase). Involved in glucose homeostasis by modulating hepatic gluconeogenesis through activation of NR0B2/SHP-mediated repression of respective genes. Modulates glycogen synthesis (inducing phosphorylation of glycogen synthase kinase-3). Modulates glucose-stimulated insulin secretion and is involved in insulin resistance. Involved in intestinal innate immunity. Plays a role in protecting the distal small intestine against bacterial overgrowth and preservation of the epithelial barrier. Down-regulates inflammatory cytokine expression in several types of immune cells including macrophages and mononuclear cells. Mediates trans-repression of TLR4-induced cytokine expression; the function seems to require its sumoylation and prevents N-CoR nuclear receptor corepressor clearance from target genes such as IL1B and NOS2. Involved in the TLR9-mediated protective mechanism in intestinal inflammation. Plays an anti-inflammatory role in liver inflammation; proposed to inhibit pro-inflammatory (but not antiapoptotic) NF-kappa-B signaling. The chain is Bile acid receptor (NR1H4) from Bos taurus (Bovine).